The following is a 159-amino-acid chain: Small ribosomal subunit protein uS19 (159 aa).

This sequence belongs to the universal ribosomal protein uS19 family.

Functionally, protein S19 forms a complex with S13 that binds strongly to the 16S ribosomal RNA. This is Small ribosomal subunit protein uS19 from Pyrobaculum arsenaticum (strain DSM 13514 / JCM 11321 / PZ6).